Here is a 430-residue protein sequence, read N- to C-terminus: Putative chloroquine resistance transporter (430 aa).

Residues 1-22 (MLKEGSSLDLSASSSSGTLRSD) form a disordered region. At 1 to 53 (MLKEGSSLDLSASSSSGTLRSDNSFGNSPLDRITSLLILIYKSIRACFKWIYS) the chain is on the cytoplasmic side. The segment covering 7–21 (SLDLSASSSSGTLRS) has biased composition (low complexity). Residues 54-74 (KSFGIICILFVILDVLTTVFF) traverse the membrane as a helical segment. Residues 75–88 (KRFIDHTKNYVMFT) lie on the Vacuolar side of the membrane. A helical transmembrane segment spans residues 89 to 109 (IQVIIFTFWIIVCCIAILCFL). The Cytoplasmic segment spans residues 110–122 (FNREYMKRHFNVR). A helical membrane pass occupies residues 123–143 (PLVFLGFLDMLSTGLSANGSA). Over 144-147 (HTSG) the chain is Vacuolar. A helical membrane pass occupies residues 148-168 (LMLVLLGQISVPLTMVSCKLI). The Cytoplasmic portion of the chain corresponds to 169–173 (LSKKY). The chain crosses the membrane as a helical span at residues 174–194 (HHYQYISSAIILTFAVLKPIL). A glycan (N-linked (GlcNAc...) asparagine) is linked at Asn195. At 195 to 206 (NRTDTTDNRFYN) the chain is on the vacuolar side. The chain crosses the membrane as a helical span at residues 207 to 223 (NMLYLLASVPDSIASAL). The Cytoplasmic segment spans residues 224-239 (REKQYTSKFFHVVKYQ). The helical transmembrane segment at 240–260 (FFGFLFHFFYNILYTLLFTLP) threads the bilayer. The Vacuolar segment spans residues 261 to 306 (FNSVKGYFDSLYKLCVNGYKCIFFGVNTITENCGPTLIPTCDNCLE). Disulfide bonds link Cys281–Cys304 and Cys293–Cys301. Residues 307 to 329 (AFKIYCLYILFSSAIRVAYVFIM) form a helical membrane-spanning segment. Topologically, residues 330-335 (LDGSVT) are cytoplasmic. The chain crosses the membrane as a helical span at residues 336–358 (FTLLLGTVKVPLTSIAFSLRFIA). Topologically, residues 359 to 364 (GDSTTS) are vacuolar. Residues 365-385 (FNLLDVVCFLGIVAGLLLYAL) form a helical membrane-spanning segment. Residues 386–430 (GSKKIQEETDLLESPLIDDAESEHELLSTGTEKLMRSEICHDLFT) are Cytoplasmic-facing.

It belongs to the CRT-like transporter family.

It localises to the vacuole membrane. In terms of biological role, nutrient transporter. Involved in maintaining the osmotic homeostasis of the digestive vacuole. The polypeptide is Putative chloroquine resistance transporter (Theileria annulata).